A 148-amino-acid chain; its full sequence is Short form salivary protein D7S1 (148 aa).

The signal sequence occupies residues 1–21; it reads MKQNVFFLIAYFSLVFCMCNA. Cystine bridges form between Cys28-Cys61, Cys41-Cys147, and Cys103-Cys119.

The protein belongs to the PBP/GOBP family. Female salivary gland.

The protein localises to the secreted. In contrast to the related D7 salivary proteins that can bind biogenic amines, does not bind serotonin. This is Short form salivary protein D7S1 from Aedes aegypti (Yellowfever mosquito).